The primary structure comprises 346 residues: Annexin A1 (346 aa).

Residue A2 is modified to N-acetylalanine. At S5 the chain carries Phosphoserine; by TRPM7. Q19 participates in a covalent cross-link: Isoglutamyl lysine isopeptide (Gln-Lys) (interchain with K-?). Y21 is modified (phosphotyrosine; by EGFR). S27 bears the Phosphoserine; by PKC mark. Phosphoserine is present on residues S34 and S37. Annexin repeat units follow at residues 42–113 (FNPS…AMLK), 114–185 (TPAQ…ALAK), 197–269 (DLAD…TIVK), and 273–344 (STPA…ALCG). K58 carries the post-translational modification N6-acetyllysine. The Ca(2+) site is built by G59, V60, E62, K97, L100, E105, M127, G129, G131, T132, and E134. T136 is subject to Phosphothreonine. Residues D171, G210, and R213 each contribute to the Ca(2+) site. Residue K214 forms a Glycyl lysine isopeptide (Lys-Gly) (interchain with G-Cter in SUMO1); alternate linkage. A Glycyl lysine isopeptide (Lys-Gly) (interchain with G-Cter in SUMO2); alternate cross-link involves residue K214. G215, D253, E255, and L256 together coordinate Ca(2+). K257 participates in a covalent cross-link: Glycyl lysine isopeptide (Lys-Gly) (interchain with G-Cter in SUMO1). Ca(2+) is bound by residues E261, M286, G288, and G290. K312 is modified (N6-acetyllysine). A disulfide bridge links C324 with C343. Residues L328, E330, and T331 each coordinate Ca(2+). K332 is covalently cross-linked (Glycyl lysine isopeptide (Lys-Gly) (interchain with G-Cter in SUMO1)). E336 lines the Ca(2+) pocket.

This sequence belongs to the annexin family. In terms of assembly, homodimer; non-covalently linked. Homodimer; linked by transglutamylation. Homodimers linked by transglutamylation are observed in placenta, but not in other tissues. Interacts with S100A11. Heterotetramer, formed by two molecules each of S100A11 and ANXA1. Interacts with DYSF. Interacts with EGFR. Post-translationally, phosphorylated by protein kinase C, EGFR and TRPM7. Phosphorylated in response to EGF treatment. In terms of processing, sumoylated. Proteolytically cleaved by cathepsin CTSG to release the active N-terminal peptide Ac2-26. As to expression, detected in eosinophils. Detected in lung, placenta, spleen and thymus (at protein level).

It localises to the nucleus. The protein resides in the cytoplasm. The protein localises to the cell projection. Its subcellular location is the cilium. It is found in the basolateral cell membrane. It localises to the lateral cell membrane. The protein resides in the cell membrane. The protein localises to the apical cell membrane. Its subcellular location is the membrane. It is found in the endosome membrane. It localises to the secreted. The protein resides in the extracellular space. The protein localises to the early endosome. Its subcellular location is the cytoplasmic vesicle membrane. It is found in the extracellular exosome. It localises to the cytoplasmic vesicle. The protein resides in the secretory vesicle lumen. The protein localises to the phagocytic cup. In terms of biological role, plays important roles in the innate immune response as effector of glucocorticoid-mediated responses and regulator of the inflammatory process. Has anti-inflammatory activity. Plays a role in glucocorticoid-mediated down-regulation of the early phase of the inflammatory response. Contributes to the adaptive immune response by enhancing signaling cascades that are triggered by T-cell activation, regulates differentiation and proliferation of activated T-cells. Promotes the differentiation of T-cells into Th1 cells and negatively regulates differentiation into Th2 cells. Has no effect on unstimulated T-cells. Negatively regulates hormone exocytosis via activation of the formyl peptide receptors and reorganization of the actin cytoskeleton. Has high affinity for Ca(2+) and can bind up to eight Ca(2+) ions. Displays Ca(2+)-dependent binding to phospholipid membranes. Plays a role in the formation of phagocytic cups and phagosomes. Plays a role in phagocytosis by mediating the Ca(2+)-dependent interaction between phagosomes and the actin cytoskeleton. Functionally, functions at least in part by activating the formyl peptide receptors and downstream signaling cascades. Promotes chemotaxis of granulocytes and monocytes via activation of the formyl peptide receptors. Promotes rearrangement of the actin cytoskeleton, cell polarization and cell migration. Promotes resolution of inflammation and wound healing. Acts via neutrophil N-formyl peptide receptors to enhance the release of CXCL2. The sequence is that of Annexin A1 (Anxa1) from Rattus norvegicus (Rat).